We begin with the raw amino-acid sequence, 323 residues long: Serpentine receptor class gamma-5 (323 aa).

Transmembrane regions (helical) follow at residues 31 to 51 (QLFY…IMLF), 63 to 83 (FIIF…DLFI), 98 to 117 (YPLF…IYNY), 151 to 171 (IPVT…NVII), 193 to 213 (WASL…ITVF), 245 to 265 (AAFF…ITAA), and 272 to 292 (FLQG…MVLI).

Belongs to the nematode receptor-like protein srg family.

It localises to the membrane. This Caenorhabditis elegans protein is Serpentine receptor class gamma-5 (srg-5).